Here is a 271-residue protein sequence, read N- to C-terminus: Glutamate racemase (271 aa).

Residues 10–11 and 42–43 each bind substrate; these read DS and YG. C73 acts as the Proton donor/acceptor in catalysis. Position 74 to 75 (74 to 75) interacts with substrate; the sequence is NT. C183 serves as the catalytic Proton donor/acceptor. A substrate-binding site is contributed by 184 to 185; sequence TH.

The protein belongs to the aspartate/glutamate racemases family.

It catalyses the reaction L-glutamate = D-glutamate. Its pathway is cell wall biogenesis; peptidoglycan biosynthesis. Functionally, provides the (R)-glutamate required for cell wall biosynthesis. In Lactococcus lactis subsp. lactis (strain IL1403) (Streptococcus lactis), this protein is Glutamate racemase.